We begin with the raw amino-acid sequence, 111 residues long: Translation initiation factor 1A 1 (111 aa).

The disordered stretch occupies residues 1 to 28; it reads MTLADLKKPTSRASPSTEETVTRVRTPR. Residues 22-96 form the S1-like domain; that stretch reads TRVRTPRREN…EKADVIWKYT (75 aa).

Belongs to the eIF-1A family.

Seems to be required for maximal rate of protein biosynthesis. Enhances ribosome dissociation into subunits and stabilizes the binding of the initiator Met-tRNA(I) to 40 S ribosomal subunits. The polypeptide is Translation initiation factor 1A 1 (eIF1A1) (Methanosarcina mazei (strain ATCC BAA-159 / DSM 3647 / Goe1 / Go1 / JCM 11833 / OCM 88) (Methanosarcina frisia)).